Here is a 70-residue protein sequence, read N- to C-terminus: Peptide Hp1035 (70 aa).

Residues 1–23 form the signal peptide; that stretch reads MKTQFVILLVALVLFQMFAQSEA. Phenylalanine amide is present on phenylalanine 36. A propeptide spanning residues 40 to 70 is cleaved from the precursor; it reads GLQDLDMDDLDQLFDGEISQADINFLNQLMR.

This sequence belongs to the non-disulfide-bridged peptide (NDBP) superfamily. Short antimicrobial peptide (group 4) family. Expressed by the venom gland.

It is found in the secreted. Its subcellular location is the target cell membrane. Its function is as follows. Amphipathic peptide with antimicrobial activity. The chain is Peptide Hp1035 from Heterometrus petersii (Asian forest scorpion).